A 311-amino-acid chain; its full sequence is Putative F-box protein At3g28280 (311 aa).

The region spanning 1–43 (MNSLPEDLLAMILVKLPIKIFTTFKIVCTQWESMVDSPYFRDL) is the F-box domain.

In Arabidopsis thaliana (Mouse-ear cress), this protein is Putative F-box protein At3g28280.